We begin with the raw amino-acid sequence, 712 residues long: MEVTLERNLGDKPLRIQTGKLAKQASGSVVVSYGETITLVTVVGSQELRPGIDFVPLSVEYQEKVYAAGRIPGNYFRREIGRPSEKETLTARLIDRPIRPLFPKTWRYETQVIATVLSMDQENDPDMLSMVGASAALCISDLPFFTPIACVRVGRIDGELVANPTISQQENCDLNIIVAGSRDGVVMVEGGGQFISEEEMLDAIYFGQESLEPLLEMQEELMEKAGVPKRSADPVEKDEYLAAKVAELADPEIKKALEINDKLERQDAIRDVKKTVMEGLGEEYEDRGKEVSEFIHDRTRVIMRAMVLDEGRRIGGRRFDEVRPITCEVGILPRTHGSALFTRGETQSLGILTLGSSGDEQRVETLYGDETRPFMLHYNFPPYSVREVKRISGPSRRDIGHGGLSTRAIKEVLPSKEDFDYTIRIVSEILESNGSSSMATVCSASLALMDGGVPITNPVSGIAMGLMAEGDKIVVLSDILGDEDHMGDMDFKVAGTKDGITSVQMDIKISSLTREIMEKALAQARVGRLHILEKMLTTISESREEMSPYAPKVFTIQIHPDKIRDIIGPGGKVIRAIQAETGTRVDVDDSGLVKVSAVNLEEGEAALQMIKDITAVPEVGAVYEGTVVKIMDFGAFVAILPGTEGLCHISQLDTKHVKKVSDVVKEGEKIKVKVLELTKDGKIRLSRKALLEEENGKSGPENGAPQRDKNRH.

Residues Asp484 and Asp490 each contribute to the Mg(2+) site. One can recognise a KH domain in the interval 551–610; it reads PKVFTIQIHPDKIRDIIGPGGKVIRAIQAETGTRVDVDDSGLVKVSAVNLEEGEAALQMI. Positions 620 to 688 constitute an S1 motif domain; it reads GAVYEGTVVK…KDGKIRLSRK (69 aa). Positions 689–712 are disordered; that stretch reads ALLEEENGKSGPENGAPQRDKNRH.

The protein belongs to the polyribonucleotide nucleotidyltransferase family. The cofactor is Mg(2+).

It localises to the cytoplasm. It catalyses the reaction RNA(n+1) + phosphate = RNA(n) + a ribonucleoside 5'-diphosphate. Involved in mRNA degradation. Catalyzes the phosphorolysis of single-stranded polyribonucleotides processively in the 3'- to 5'-direction. This Desulfatibacillum aliphaticivorans protein is Polyribonucleotide nucleotidyltransferase.